We begin with the raw amino-acid sequence, 764 residues long: Acylamino-acid-releasing enzyme (764 aa).

Catalysis depends on charge relay system residues Ser-618, Asp-707, and His-739.

It belongs to the peptidase S9C family. In terms of assembly, homotetramer.

The protein localises to the cytoplasm. It is found in the nucleus. It carries out the reaction Cleavage of an N-acetyl or N-formyl amino acid from the N-terminus of a polypeptide.. With respect to regulation, strongly inhibited by the serine protease inhibitor diisopropyl fluorophosphate. In terms of biological role, catalyzes the hydrolysis of the N-terminal peptide bond of an N-acetylated peptide to generate an N-acetylated amino acid and a peptide with a free N-terminus. Can degrade the glycated RuBisCO (ribulose-1,5-bisphosphate carboxylase/oxygenase) protein but not the native protein. May be involved in the elimination of glycated proteins. Plays a homeostatic role in sustaining the cytoplasmic antioxidative system. May contribute to the elimination of the oxidized proteins in the cytoplasm. The chain is Acylamino-acid-releasing enzyme from Arabidopsis thaliana (Mouse-ear cress).